The following is a 430-amino-acid chain: Nitroalkane oxidase (430 aa).

FAD contacts are provided by residues 132 to 135, 140 to 142, 170 to 172, Arg301, Gln311, 372 to 376, and 397 to 401; these read LVFS, VAN, WAT, NAVGI, and IFDGG. Asp399 acts as the Proton acceptor in catalysis.

Belongs to the acyl-CoA dehydrogenase family. In terms of assembly, homotetramer. FAD serves as cofactor.

It catalyses the reaction a primary nitroalkane + O2 + H2O = an aldehyde + nitrite + H2O2 + H(+). The enzyme catalyses a secondary nitroalkane + O2 + H2O = a ketone + nitrite + H2O2 + H(+). Nitroalkane oxidase (NAO) catalyzes the oxidation of nitroalkanes to the corresponding aldehydes or ketones with the release of nitrite and the consumption of molecular oxygen to yield hydrogen peroxide. NAO is unusual, since it catalyzes substrate oxidation by removing a substrate proton to form a carbanion intermediate. Prefers longer nitroalkanes, with 1-nitrohexane having the highest activity. The polypeptide is Nitroalkane oxidase (Podospora anserina (strain S / ATCC MYA-4624 / DSM 980 / FGSC 10383) (Pleurage anserina)).